Reading from the N-terminus, the 800-residue chain is Internalin A (800 aa).

The signal sequence occupies residues 1-35 (MRKKRYVWLKSILVAILVFGSGVWINTSNGTNAQA). The 41-residue stretch at 36–76 (ATITQDTPINQIFTDAALAEKMKTVLGKTNVTDTVSQTDLD) folds into the LRRNT domain. 15 LRR repeats span residues 77 to 98 (QVTT…EYLN), 99 to 120 (NLTQ…KDLT), 121 to 142 (KLVD…ANLT), 143 to 164 (NLTG…KNLT), 165 to 186 (NLNR…SGLT), 187 to 207 (NLQQ…ANLT), 208 to 229 (TLER…AKLT), 230 to 251 (NLES…GILT), 252 to 273 (NLDE…ASLT), 274 to 295 (NLTD…SGLT), 296 to 317 (KLTE…AGLT), 318 to 339 (ALTN…SNLK), 340 to 361 (NLTY…SSLT), 362 to 383 (KLQR…ANLT), and 384 to 405 (NINW…ANLT). The LRRCT domain occupies 416-505 (AWTNAPVNYK…AIFNAKFHVD (90 aa)). The B-1 repeat unit spans residues 518-587 (LLTEPAKPVK…TTSQTVDYQG (70 aa)). Residues 518–706 (LLTEPAKPVK…ITLYAQFTKN (189 aa)) form a 3 X approximate tandem repeats, type B region. A B-2 repeat occupies 588–657 (LLQEPTPPTK…STTQAVDYQG (70 aa)). A B-3 repeat occupies 658–706 (LLKEPKAPTKAGYTFKGWYDEKTDGKKWDFATDKMPANDITLYAQFTKN). Positions 705 to 757 (KNPVAPPTTGGNTPPTTNNGGNTTPPSANIPGSDTSNTSTGNSASTTSTMNAY) are disordered. Over residues 711–753 (PTTGGNTPPTTNNGGNTTPPSANIPGSDTSNTSTGNSASTTST) the composition is skewed to low complexity. The LPXTG sorting signal motif lies at 767-771 (LPTTG). Thr770 carries the pentaglycyl murein peptidoglycan amidated threonine modification. The propeptide at 771–800 (GDSDNALYLLLGLLAVGTAMALTKKARASK) is removed by sortase A.

This sequence belongs to the internalin family.

It localises to the secreted. The protein localises to the cell wall. Mediates the entry of Listeria monocytogenes into cells. Binds to host receptor cadherin-1 (E-cadherin, CDH1). The sequence is that of Internalin A (inlA) from Listeria monocytogenes serotype 1/2a (strain 10403S).